Consider the following 38-residue polypeptide: L-amino-acid oxidase (38 aa).

It belongs to the flavin monoamine oxidase family. FIG1 subfamily. Homodimer; non-covalently linked. FAD is required as a cofactor. Post-translationally, N-glycosylated. As to expression, expressed by the venom gland.

It is found in the secreted. It catalyses the reaction an L-alpha-amino acid + O2 + H2O = a 2-oxocarboxylate + H2O2 + NH4(+). The catalysed reaction is L-leucine + O2 + H2O = 4-methyl-2-oxopentanoate + H2O2 + NH4(+). The enzyme catalyses L-phenylalanine + O2 + H2O = 3-phenylpyruvate + H2O2 + NH4(+). It carries out the reaction L-tryptophan + O2 + H2O = indole-3-pyruvate + H2O2 + NH4(+). It catalyses the reaction L-methionine + O2 + H2O = 4-methylsulfanyl-2-oxobutanoate + H2O2 + NH4(+). The catalysed reaction is L-arginine + O2 + H2O = 5-guanidino-2-oxopentanoate + H2O2 + NH4(+). The enzyme catalyses L-2-aminohexanoate + O2 + H2O = 2-oxohexanoate + H2O2 + NH4(+). It carries out the reaction L-2-aminopentanoate + O2 + H2O = 2-oxopentanoate + H2O2 + NH4(+). It catalyses the reaction L-tyrosine + O2 + H2O = 3-(4-hydroxyphenyl)pyruvate + H2O2 + NH4(+). Catalyzes an oxidative deamination of predominantly hydrophobic and aromatic L-amino acids, thus producing hydrogen peroxide that may contribute to the diverse toxic effects of this enzyme. Is very active against L-Phe and L-Tyr, moderately active against L-Trp, L-Met, L-Leu, L-norleucine (L-2-aminohexanoate), L-Arg and L-norvaline (L-2-aminopentanoate), and slightly active against L-His, L-cystine, and L-Ile. L-Gln, L-Lys, L-Asn, L-ornithine, L-Ala and L-Val are oxidized very slowly. Exhibits diverse biological activities, such as hemorrhage, hemolysis, edema, apoptosis of vascular endothelial cells or tumor cell lines, antibacterial and antiparasitic activities. This protein inhibits both agonist- and shear stress-induced platelet aggregation (SIPA). Effects of snake L-amino oxidases on platelets are controversial, since they either induce aggregation or inhibit agonist-induced aggregation. These different effects are probably due to different experimental conditions. The sequence is that of L-amino-acid oxidase from Naja kaouthia (Monocled cobra).